The sequence spans 165 residues: NADH-ubiquinone oxidoreductase chain 6 (165 aa).

The next 4 helical transmembrane spans lie at 1 to 21 (MVVYVTLIVMLFGSTLVFYSL), 47 to 67 (SFVPIVLFLVYIGGMLVVFPY), 83 to 103 (GEVVGLVFLFSSWVFMSFDNF), and 130 to 150 (GVLVILGVFVLLVALVGALII).

The protein belongs to the complex I subunit 6 family.

It is found in the mitochondrion membrane. It carries out the reaction a ubiquinone + NADH + 5 H(+)(in) = a ubiquinol + NAD(+) + 4 H(+)(out). In terms of biological role, core subunit of the mitochondrial membrane respiratory chain NADH dehydrogenase (Complex I) that is believed to belong to the minimal assembly required for catalysis. Complex I functions in the transfer of electrons from NADH to the respiratory chain. The immediate electron acceptor for the enzyme is believed to be ubiquinone. The polypeptide is NADH-ubiquinone oxidoreductase chain 6 (ND6) (Strongylocentrotus purpuratus (Purple sea urchin)).